The chain runs to 215 residues: MNAPAPSSIRRTKKLPPLRVGIGGPVGSGKTTLLEMLCKAMRDRYDLVAITNDIYTKEDQRLLTVAGALPEERIMGVETGGCPHTAIREDASINLEAVDRMLARFPDADIVFIESGGDNLAATFSPELSDLTIYVIDVAGGEKIPRKGGPGITKSDLLVINKTDLAPLVGANLDVMASDTRKMRGERPYVMTNLKALDGVADVIAFIEKKGLLTV.

Residue 24–31 (GPVGSGKT) coordinates GTP.

This sequence belongs to the SIMIBI class G3E GTPase family. UreG subfamily. Homodimer. UreD, UreF and UreG form a complex that acts as a GTP-hydrolysis-dependent molecular chaperone, activating the urease apoprotein by helping to assemble the nickel containing metallocenter of UreC. The UreE protein probably delivers the nickel.

Its subcellular location is the cytoplasm. Functionally, facilitates the functional incorporation of the urease nickel metallocenter. This process requires GTP hydrolysis, probably effectuated by UreG. This Burkholderia cenocepacia (strain HI2424) protein is Urease accessory protein UreG.